Consider the following 281-residue polypeptide: Shikimate dehydrogenase (NADP(+)) (281 aa).

Shikimate contacts are provided by residues 15 to 17 (SKS) and Thr-62. Lys-66 serves as the catalytic Proton acceptor. Shikimate is bound by residues Asn-87 and Asp-102. Residues 127–131 (GAGGS), 151–156 (NRTPER), and Leu-217 each bind NADP(+). Shikimate is bound at residue Tyr-219. NADP(+) is bound at residue Gly-241.

This sequence belongs to the shikimate dehydrogenase family. Homodimer.

The catalysed reaction is shikimate + NADP(+) = 3-dehydroshikimate + NADPH + H(+). Its pathway is metabolic intermediate biosynthesis; chorismate biosynthesis; chorismate from D-erythrose 4-phosphate and phosphoenolpyruvate: step 4/7. Functionally, involved in the biosynthesis of the chorismate, which leads to the biosynthesis of aromatic amino acids. Catalyzes the reversible NADPH linked reduction of 3-dehydroshikimate (DHSA) to yield shikimate (SA). The polypeptide is Shikimate dehydrogenase (NADP(+)) (Stenotrophomonas maltophilia (strain K279a)).